Consider the following 658-residue polypeptide: Protein kinase and PP2C-like domain-containing protein (658 aa).

The Protein kinase domain occupies 30 to 314; it reads FTLLSPIAKG…DNVVLELESI (285 aa). ATP contacts are provided by residues 36 to 44 and Lys-57; that span reads IAKGSESVV. Asp-149 (proton acceptor) is an active-site residue. A PPM-type phosphatase domain is found at 392–648; that stretch reads SCGSFATCGR…DNITVIVVFL (257 aa). The Mn(2+) site is built by Asp-428, Gly-429, Asp-599, and Asp-639.

This sequence in the N-terminal section; belongs to the protein kinase superfamily. Ser/Thr protein kinase family. It in the C-terminal section; belongs to the PP2C family. It depends on Mg(2+) as a cofactor. Mn(2+) is required as a cofactor.

The enzyme catalyses L-seryl-[protein] + ATP = O-phospho-L-seryl-[protein] + ADP + H(+). It carries out the reaction L-threonyl-[protein] + ATP = O-phospho-L-threonyl-[protein] + ADP + H(+). It catalyses the reaction O-phospho-L-seryl-[protein] + H2O = L-seryl-[protein] + phosphate. The catalysed reaction is O-phospho-L-threonyl-[protein] + H2O = L-threonyl-[protein] + phosphate. In Arabidopsis thaliana (Mouse-ear cress), this protein is Protein kinase and PP2C-like domain-containing protein.